The following is an 862-amino-acid chain: MGAQVSTQKTGAHETLLEAAQGATINYTNINYYKDAASNSANRQDFSQDPSKFTEPVKDIMIKSMPALNSPSAEECGYSDRVRSITLGNSTITTQESANVVVAYGRWPKYLEDDQATAEDQPTQPDVATCRFYTLESVQWEANSAGWWWKFPEALKDMGLFGQNMYYHYLGRAGYTIHVQCNASKFHQGCLLVVCVPEAEMGCAKPDENVDATNLTNGENTCELTAGAAPAEKGKVQTAVCNATMGVAVGNLTIFPHQWINLRTNNCATIVMPYINSVPMDNMFRHYNFTLMVIPFVPLTSMGGSTYVPITVTIAPMCAEYNGLRLSTQHQGLPVMNVPGSNQFLTSDNFQSPCAMPEYDVTPPLDIPGEVNNLMEVAEVDSVVPVNNLSDNVKTIKAYQIPVSAGDSSRPEAVFKFQLDPGSGSVLKHTLLGEIINYYAHWSGSIKLTFVFCGSAMATGKLLIAYSPPGASAPATRKDAMLGTHIIWDLGLQSSCVLCVPWISQTHYRMVERDEYTTAGYISCWYQTNIIVPPDTPSQCYMLCLASACNDFSVRMLKDTPFIQQEAKLQGEPGKAIESAISRVADTISSGPTNSEQVPALTAAETGHTSQVVPGDTIQTRHVKNYHSRSESTIENFLCRSACVHIARYEAGANASNEDRFVRWEINNKELVQLRRKCEMFTYLRYDVEVTFVITSQQDQGTDLSQDMPVLTHQVMYVPPGGSVTKQGDSYAWQTSTNPSVFWTEGNAPPRMSIPFISIGNAYSSFYDGWSHFSQKGVYGYNTLNKMGTLFVRHVNKETPKPVTSTVRVYFKPKHIRAWIPRPPRLCPYKYKANVNFDVTAITDSRLTITTVPQVEHNLRTA.

The N-myristoyl glycine; by host moiety is linked to residue glycine 2.

Belongs to the picornaviruses polyprotein family. In terms of assembly, interacts with capsid protein VP1 and capsid protein VP3 to form heterotrimeric protomers. As to quaternary structure, interacts with capsid protein VP0, and capsid protein VP3 to form heterotrimeric protomers. Five protomers subsequently associate to form pentamers which serve as building blocks for the capsid. Interacts with capsid protein VP2, capsid protein VP3 and capsid protein VP4 following cleavage of capsid protein VP0. Interacts with capsid protein VP1 and capsid protein VP3 in the mature capsid. In terms of assembly, interacts with capsid protein VP0 and capsid protein VP1 to form heterotrimeric protomers. Five protomers subsequently associate to form pentamers which serve as building blocks for the capsid. Interacts with capsid protein VP4 in the mature capsid. Interacts with protein 2C; this interaction may be important for virion morphogenesis. As to quaternary structure, interacts with capsid protein VP1 and capsid protein VP3. Specific enzymatic cleavages in vivo by the viral proteases yield processing intermediates and the mature proteins. In terms of processing, myristoylation is required for the formation of pentamers during virus assembly. Further assembly of 12 pentamers and a molecule of genomic RNA generates the provirion. Post-translationally, during virion maturation, immature virions are rendered infectious following cleavage of VP0 into VP4 and VP2. This maturation seems to be an autocatalytic event triggered by the presence of RNA in the capsid and it is followed by a conformational change infectious virion. Myristoylation is required during RNA encapsidation and formation of the mature virus particle.

It is found in the virion. The protein resides in the host cytoplasm. In terms of biological role, forms an icosahedral capsid of pseudo T=3 symmetry with capsid proteins VP2 and VP3. The capsid is 300 Angstroms in diameter, composed of 60 copies of each capsid protein and enclosing the viral positive strand RNA genome. Capsid protein VP1 mainly forms the vertices of the capsid. Capsid protein VP1 interacts with host cell receptor to provide virion attachment to target host cells. This attachment induces virion internalization. Tyrosine kinases are probably involved in the entry process. After binding to its receptor, the capsid undergoes conformational changes. Capsid protein VP1 N-terminus (that contains an amphipathic alpha-helix) and capsid protein VP4 are externalized. Together, they shape a pore in the host membrane through which viral genome is translocated to host cell cytoplasm. Its function is as follows. Forms an icosahedral capsid of pseudo T=3 symmetry with capsid proteins VP2 and VP3. The capsid is 300 Angstroms in diameter, composed of 60 copies of each capsid protein and enclosing the viral positive strand RNA genome. Lies on the inner surface of the capsid shell. After binding to the host receptor, the capsid undergoes conformational changes. Capsid protein VP4 is released, Capsid protein VP1 N-terminus is externalized, and together, they shape a pore in the host membrane through which the viral genome is translocated into the host cell cytoplasm. Functionally, component of immature procapsids, which is cleaved into capsid proteins VP4 and VP2 after maturation. Allows the capsid to remain inactive before the maturation step. This chain is Genome polyprotein, found in Echovirus 16 (strain Harrington).